The sequence spans 96 residues: Co-chaperonin GroES 1 (96 aa).

The protein belongs to the GroES chaperonin family. Heptamer of 7 subunits arranged in a ring. Interacts with the chaperonin GroEL.

It is found in the cytoplasm. Together with the chaperonin GroEL, plays an essential role in assisting protein folding. The GroEL-GroES system forms a nano-cage that allows encapsulation of the non-native substrate proteins and provides a physical environment optimized to promote and accelerate protein folding. GroES binds to the apical surface of the GroEL ring, thereby capping the opening of the GroEL channel. In Vibrio cholerae serotype O1 (strain ATCC 39315 / El Tor Inaba N16961), this protein is Co-chaperonin GroES 1.